A 102-amino-acid polypeptide reads, in one-letter code: Small ribosomal subunit protein uS10 (102 aa).

The protein belongs to the universal ribosomal protein uS10 family. Part of the 30S ribosomal subunit.

Involved in the binding of tRNA to the ribosomes. This Akkermansia muciniphila (strain ATCC BAA-835 / DSM 22959 / JCM 33894 / BCRC 81048 / CCUG 64013 / CIP 107961 / Muc) protein is Small ribosomal subunit protein uS10.